Reading from the N-terminus, the 1629-residue chain is Ferredoxin-dependent glutamate synthase 2, chloroplastic (1629 aa).

The N-terminal 107 residues, 1–107, are a transit peptide targeting the chloroplast; sequence MALQSPGATG…LEDIISERGA (107 aa). The active-site For GATase activity is the Cys-108. The region spanning 108–507 is the Glutamine amidotransferase type-2 domain; it reads CGVGFIANLE…PGMMISVDLE (400 aa). 1186–1243 serves as a coordination point for FMN; sequence LAETQKTLIGNGLRERVIIRVDGGFKSGVDVLIAAAMGADEYGFGTLAMIATGCIMAR. Residues Cys-1239, Cys-1245, and Cys-1250 each contribute to the [3Fe-4S] cluster site. The tract at residues 1599 to 1629 is disordered; that stretch reads SEEDTPEANSDHILKTTTGDEEQVSSTLAEK.

It belongs to the glutamate synthase family. The cofactor is [3Fe-4S] cluster. It depends on FAD as a cofactor. Requires FMN as cofactor. Expressed predominantly in roots and slightly in leaves. Low expression in the leaf mesophyll and phloem companion cell-sieve element complex.

It localises to the plastid. It is found in the chloroplast stroma. It catalyses the reaction 2 oxidized [2Fe-2S]-[ferredoxin] + 2 L-glutamate = L-glutamine + 2 reduced [2Fe-2S]-[ferredoxin] + 2-oxoglutarate + 2 H(+). The protein operates within amino-acid biosynthesis; L-glutamate biosynthesis via GLT pathway; L-glutamate from 2-oxoglutarate and L-glutamine (ferredoxin route): step 1/1. Its pathway is energy metabolism; nitrogen metabolism. Functionally, may play a role in primary nitrogen assimilation in roots. Could supply a constitutive level of glutamate to maintain a basal level of protein synthesis. This chain is Ferredoxin-dependent glutamate synthase 2, chloroplastic (GLU2), found in Arabidopsis thaliana (Mouse-ear cress).